Here is a 105-residue protein sequence, read N- to C-terminus: Guanidinium exporter (105 aa).

The helical transmembrane segment at 1–21 (MSWIILLIAGLLEVVWAVGLK) threads the bilayer. Topologically, residues 22 to 28 (YTHGFSR) are cytoplasmic. A helical membrane pass occupies residues 29–49 (LTPSIITITAMVISMALLSWA). The Periplasmic portion of the chain corresponds to 50-57 (MKTLPVGT). The chain crosses the membrane as a helical span at residues 58-78 (AYAIWTGIGAVGAAITGILLL). At 79–81 (GES) the chain is on the cytoplasmic side. Residues 82-102 (ASPARLLSLGLIVAGIIGLKL) form a helical membrane-spanning segment. Over 103 to 105 (SAH) the chain is Periplasmic.

It belongs to the drug/metabolite transporter (DMT) superfamily. Small multidrug resistance (SMR) (TC 2.A.7.1) family. Gdx/SugE subfamily.

It localises to the cell inner membrane. Guanidinium ion exporter. Couples guanidinium export to the proton motive force, exchanging one guanidinium ion for two protons. The sequence is that of Guanidinium exporter from Salmonella typhi.